Consider the following 291-residue polypeptide: ATP synthase gamma chain (291 aa).

It belongs to the ATPase gamma chain family. In terms of assembly, F-type ATPases have 2 components, CF(1) - the catalytic core - and CF(0) - the membrane proton channel. CF(1) has five subunits: alpha(3), beta(3), gamma(1), delta(1), epsilon(1). CF(0) has three main subunits: a, b and c.

The protein localises to the cell inner membrane. Its function is as follows. Produces ATP from ADP in the presence of a proton gradient across the membrane. The gamma chain is believed to be important in regulating ATPase activity and the flow of protons through the CF(0) complex. In Sinorhizobium medicae (strain WSM419) (Ensifer medicae), this protein is ATP synthase gamma chain.